Consider the following 150-residue polypeptide: SsrA-binding protein (150 aa).

This sequence belongs to the SmpB family.

It is found in the cytoplasm. In terms of biological role, required for rescue of stalled ribosomes mediated by trans-translation. Binds to transfer-messenger RNA (tmRNA), required for stable association of tmRNA with ribosomes. tmRNA and SmpB together mimic tRNA shape, replacing the anticodon stem-loop with SmpB. tmRNA is encoded by the ssrA gene; the 2 termini fold to resemble tRNA(Ala) and it encodes a 'tag peptide', a short internal open reading frame. During trans-translation Ala-aminoacylated tmRNA acts like a tRNA, entering the A-site of stalled ribosomes, displacing the stalled mRNA. The ribosome then switches to translate the ORF on the tmRNA; the nascent peptide is terminated with the 'tag peptide' encoded by the tmRNA and targeted for degradation. The ribosome is freed to recommence translation, which seems to be the essential function of trans-translation. In Campylobacter jejuni subsp. doylei (strain ATCC BAA-1458 / RM4099 / 269.97), this protein is SsrA-binding protein.